The primary structure comprises 72 residues: Translation initiation factor IF-1 (72 aa).

An S1-like domain is found at 1–72 (MSKEEVLEFS…TKGRITYRYK (72 aa)).

This sequence belongs to the IF-1 family. As to quaternary structure, component of the 30S ribosomal translation pre-initiation complex which assembles on the 30S ribosome in the order IF-2 and IF-3, IF-1 and N-formylmethionyl-tRNA(fMet); mRNA recruitment can occur at any time during PIC assembly.

The protein resides in the cytoplasm. Functionally, one of the essential components for the initiation of protein synthesis. Stabilizes the binding of IF-2 and IF-3 on the 30S subunit to which N-formylmethionyl-tRNA(fMet) subsequently binds. Helps modulate mRNA selection, yielding the 30S pre-initiation complex (PIC). Upon addition of the 50S ribosomal subunit IF-1, IF-2 and IF-3 are released leaving the mature 70S translation initiation complex. The protein is Translation initiation factor IF-1 of Bartonella bacilliformis (strain ATCC 35685 / KC583 / Herrer 020/F12,63).